A 159-amino-acid chain; its full sequence is SsrA-binding protein (159 aa).

The protein belongs to the SmpB family.

The protein resides in the cytoplasm. In terms of biological role, required for rescue of stalled ribosomes mediated by trans-translation. Binds to transfer-messenger RNA (tmRNA), required for stable association of tmRNA with ribosomes. tmRNA and SmpB together mimic tRNA shape, replacing the anticodon stem-loop with SmpB. tmRNA is encoded by the ssrA gene; the 2 termini fold to resemble tRNA(Ala) and it encodes a 'tag peptide', a short internal open reading frame. During trans-translation Ala-aminoacylated tmRNA acts like a tRNA, entering the A-site of stalled ribosomes, displacing the stalled mRNA. The ribosome then switches to translate the ORF on the tmRNA; the nascent peptide is terminated with the 'tag peptide' encoded by the tmRNA and targeted for degradation. The ribosome is freed to recommence translation, which seems to be the essential function of trans-translation. This is SsrA-binding protein from Acidothermus cellulolyticus (strain ATCC 43068 / DSM 8971 / 11B).